Reading from the N-terminus, the 1529-residue chain is uncharacterized protein (1529 aa).

Positions M1–N11 are enriched in low complexity. 7 disordered regions span residues M1 to V85, L335 to S371, L660 to A694, N798 to S843, S1016 to N1035, Q1334 to Q1364, and Q1454 to P1497. Positions Q24–S42 are enriched in polar residues. The segment covering I51 to S79 has biased composition (low complexity). The span at N810 to N833 shows a compositional bias: low complexity. Polar residues-rich tracts occupy residues V834–S843 and S1016–D1027. The segment covering Q1454 to S1494 has biased composition (low complexity).

This is an uncharacterized protein from Dictyostelium discoideum (Social amoeba).